The sequence spans 259 residues: Thiazole synthase (259 aa).

Lys98 functions as the Schiff-base intermediate with DXP in the catalytic mechanism. Residues Gly159, 185–186, and 207–208 each bind 1-deoxy-D-xylulose 5-phosphate; these read AG and NS.

This sequence belongs to the ThiG family. Homotetramer. Forms heterodimers with either ThiH or ThiS.

The protein resides in the cytoplasm. It catalyses the reaction [ThiS sulfur-carrier protein]-C-terminal-Gly-aminoethanethioate + 2-iminoacetate + 1-deoxy-D-xylulose 5-phosphate = [ThiS sulfur-carrier protein]-C-terminal Gly-Gly + 2-[(2R,5Z)-2-carboxy-4-methylthiazol-5(2H)-ylidene]ethyl phosphate + 2 H2O + H(+). The protein operates within cofactor biosynthesis; thiamine diphosphate biosynthesis. Catalyzes the rearrangement of 1-deoxy-D-xylulose 5-phosphate (DXP) to produce the thiazole phosphate moiety of thiamine. Sulfur is provided by the thiocarboxylate moiety of the carrier protein ThiS. In vitro, sulfur can be provided by H(2)S. This Chlorobium phaeovibrioides (strain DSM 265 / 1930) (Prosthecochloris vibrioformis (strain DSM 265)) protein is Thiazole synthase.